Reading from the N-terminus, the 278-residue chain is Betaine--homocysteine S-methyltransferase 1 (278 aa).

Residues 11–278 (KGILERLNSG…FGLEPRVATR (268 aa)) form the Hcy-binding domain. Residues Lys-40, Lys-93, and Lys-98 each carry the N6-succinyllysine modification. Cys-217 is a binding site for Zn(2+). N6-succinyllysine occurs at positions 232 and 241.

In terms of assembly, homotetramer. Zn(2+) serves as cofactor. In terms of tissue distribution, found exclusively in liver and kidney.

Its subcellular location is the cytoplasm. It localises to the cytosol. It is found in the nucleus. The catalysed reaction is L-homocysteine + glycine betaine = N,N-dimethylglycine + L-methionine. It functions in the pathway amine and polyamine degradation; betaine degradation; sarcosine from betaine: step 1/2. It participates in amino-acid biosynthesis; L-methionine biosynthesis via de novo pathway; L-methionine from L-homocysteine (BhmT route): step 1/1. Inhibited by dimethylglycine and methylthioacetate. Functionally, involved in the regulation of homocysteine metabolism. Converts betaine and homocysteine to dimethylglycine and methionine, respectively. This reaction is also required for the irreversible oxidation of choline. The polypeptide is Betaine--homocysteine S-methyltransferase 1 (Sus scrofa (Pig)).